Consider the following 174-residue polypeptide: Balbiani ring protein 1 (174 aa).

The segment at 28-174 (KCRCTSAGKP…RPEGCGSAMR (147 aa)) is disordered. 8 tandem repeats follow at residues 42 to 52 (EPSKGSKPRPE), 53 to 63 (KPSKGSKPRPE), 64 to 74 (KPSKGSKPKPE), 75 to 85 (KPSKGSKPRPE), 124 to 134 (EPSKGSKPRPE), 135 to 145 (KPSKESKPRPE), 146 to 156 (KPSKGSKPRPE), and 157 to 167 (KPSKGSKPRPE). 2 4 X 11 AA tandem repeats regions span residues 42-85 (EPSK…PRPE) and 124-167 (EPSK…PRPE). 2 stretches are compositionally biased toward basic and acidic residues: residues 49-100 (PRPE…EKCA) and 121-159 (RKSE…EKPS).

Salivary gland.

It is found in the secreted. Functionally, used by the larvae to construct a supramolecular structure, the larval tube. The protein is Balbiani ring protein 1 (BR1) of Chironomus tentans (Midge).